The chain runs to 372 residues: Mitogen-activated protein kinase spk1 (372 aa).

Polar residues predominate over residues 1–25; the sequence is MASATSTPTIADGNSNKESVATSRS. Residues 1–29 are disordered; the sequence is MASATSTPTIADGNSNKESVATSRSPHTH. Positions 39 to 327 constitute a Protein kinase domain; the sequence is YEMINLIGQG…AEEALKHPYV (289 aa). ATP contacts are provided by residues 45 to 53 and lysine 68; that span reads IGQGAYGVV. The active-site Proton acceptor is aspartate 163. Residue threonine 199 is modified to Phosphothreonine. The TXY signature appears at 199 to 201; the sequence is TEY. Tyrosine 201 carries the phosphotyrosine modification.

This sequence belongs to the protein kinase superfamily. CMGC Ser/Thr protein kinase family. MAP kinase subfamily. Mg(2+) serves as cofactor. Post-translationally, dually phosphorylated on Thr-199 and Tyr-201, which activates the enzyme.

It is found in the nucleus. It catalyses the reaction L-seryl-[protein] + ATP = O-phospho-L-seryl-[protein] + ADP + H(+). The enzyme catalyses L-threonyl-[protein] + ATP = O-phospho-L-threonyl-[protein] + ADP + H(+). With respect to regulation, activated by tyrosine and threonine phosphorylation. Its function is as follows. Involved in mating signal transduction pathway. This Schizosaccharomyces pombe (strain 972 / ATCC 24843) (Fission yeast) protein is Mitogen-activated protein kinase spk1 (spk1).